A 1302-amino-acid chain; its full sequence is Phosphoribosylformylglycinamidine synthase (1302 aa).

Residues 307–318 and alanine 678 contribute to the ATP site; that span reads GASTGSGGEIRD. Positions 718, 722, and 891 each coordinate Mg(2+). Residues 1049–1302 enclose the Glutamine amidotransferase type-1 domain; that stretch reads MAILREQGVN…MFQNARKNIG (254 aa). The Nucleophile role is filled by cysteine 1142. Catalysis depends on residues histidine 1267 and glutamate 1269.

In the N-terminal section; belongs to the FGAMS family. As to quaternary structure, monomer.

It is found in the cytoplasm. It carries out the reaction N(2)-formyl-N(1)-(5-phospho-beta-D-ribosyl)glycinamide + L-glutamine + ATP + H2O = 2-formamido-N(1)-(5-O-phospho-beta-D-ribosyl)acetamidine + L-glutamate + ADP + phosphate + H(+). Its pathway is purine metabolism; IMP biosynthesis via de novo pathway; 5-amino-1-(5-phospho-D-ribosyl)imidazole from N(2)-formyl-N(1)-(5-phospho-D-ribosyl)glycinamide: step 1/2. Its function is as follows. Phosphoribosylformylglycinamidine synthase involved in the purines biosynthetic pathway. Catalyzes the ATP-dependent conversion of formylglycinamide ribonucleotide (FGAR) and glutamine to yield formylglycinamidine ribonucleotide (FGAM) and glutamate. The polypeptide is Phosphoribosylformylglycinamidine synthase (Vibrio parahaemolyticus serotype O3:K6 (strain RIMD 2210633)).